The sequence spans 204 residues: Putative uracil phosphoribosyltransferase urg2 (204 aa).

Residues Arg75, Arg100, and 126-134 (DPVMATGGT) contribute to the 5-phospho-alpha-D-ribose 1-diphosphate site. D-ribose 5-phosphate is bound at residue Tyr187. Uracil contacts are provided by residues Leu188 and 193–195 (GDI). Asp194 serves as a coordination point for 5-phospho-alpha-D-ribose 1-diphosphate.

It belongs to the UPRTase family. Mg(2+) serves as cofactor.

It localises to the cytoplasm. It is found in the nucleus. It carries out the reaction UMP + diphosphate = 5-phospho-alpha-D-ribose 1-diphosphate + uracil. The protein operates within pyrimidine metabolism; UMP biosynthesis via salvage pathway; UMP from uracil: step 1/1. Allosterically activated by GTP. Its function is as follows. Catalyzes the conversion of uracil and 5-phospho-alpha-D-ribose 1-diphosphate (PRPP) to UMP and diphosphate. The sequence is that of Putative uracil phosphoribosyltransferase urg2 from Schizosaccharomyces pombe (strain 972 / ATCC 24843) (Fission yeast).